A 139-amino-acid chain; its full sequence is Nucleoside diphosphate kinase (139 aa).

ATP contacts are provided by K10, F58, R86, T92, R104, and N114. The active-site Pros-phosphohistidine intermediate is the H117.

Belongs to the NDK family. Homotetramer. The cofactor is Mg(2+).

The protein localises to the cytoplasm. It catalyses the reaction a 2'-deoxyribonucleoside 5'-diphosphate + ATP = a 2'-deoxyribonucleoside 5'-triphosphate + ADP. The enzyme catalyses a ribonucleoside 5'-diphosphate + ATP = a ribonucleoside 5'-triphosphate + ADP. Major role in the synthesis of nucleoside triphosphates other than ATP. The ATP gamma phosphate is transferred to the NDP beta phosphate via a ping-pong mechanism, using a phosphorylated active-site intermediate. This chain is Nucleoside diphosphate kinase, found in Mycolicibacterium smegmatis (strain ATCC 700084 / mc(2)155) (Mycobacterium smegmatis).